We begin with the raw amino-acid sequence, 368 residues long: 3-dehydroquinate synthase (368 aa).

NAD(+)-binding positions include 110 to 114 (GVIGD), 134 to 135 (TS), Lys-147, and Lys-156. Zn(2+) contacts are provided by Glu-189, His-254, and His-271.

This sequence belongs to the sugar phosphate cyclases superfamily. Dehydroquinate synthase family. Requires NAD(+) as cofactor. Co(2+) is required as a cofactor. Zn(2+) serves as cofactor.

It is found in the cytoplasm. It carries out the reaction 7-phospho-2-dehydro-3-deoxy-D-arabino-heptonate = 3-dehydroquinate + phosphate. Its pathway is metabolic intermediate biosynthesis; chorismate biosynthesis; chorismate from D-erythrose 4-phosphate and phosphoenolpyruvate: step 2/7. Its function is as follows. Catalyzes the conversion of 3-deoxy-D-arabino-heptulosonate 7-phosphate (DAHP) to dehydroquinate (DHQ). This Thermosynechococcus vestitus (strain NIES-2133 / IAM M-273 / BP-1) protein is 3-dehydroquinate synthase.